The following is a 474-amino-acid chain: Lactococcin A secretion protein LcnD (474 aa).

Topologically, residues 1 to 21 (MFDKKLLESSELYDKRYRNFS) are cytoplasmic. A helical transmembrane segment spans residues 22-44 (TLIILPLFILLVGGVIFTFFAHK). Topologically, residues 45–474 (ELTVISTGSI…LDKIMGRGNQ (430 aa)) are extracellular.

Belongs to the membrane fusion protein (MFP) (TC 8.A.1) family.

Its subcellular location is the cell membrane. In terms of biological role, involved in the secretion of lactococcin A. This is Lactococcin A secretion protein LcnD (lcnD) from Lactococcus lactis subsp. cremoris (Streptococcus cremoris).